Reading from the N-terminus, the 292-residue chain is Protein LRATD1 (292 aa).

Serine 38 carries the post-translational modification Phosphoserine. Residues proline 133 to alanine 228 form the LRAT domain.

Belongs to the LRATD family. In terms of tissue distribution, only detected in testis. Highly expressed in colon cancer cells.

The protein localises to the cytoplasm. Its function is as follows. May play a role in cell morphology and motility. This is Protein LRATD1 from Homo sapiens (Human).